Consider the following 100-residue polypeptide: Aspartyl/glutamyl-tRNA(Asn/Gln) amidotransferase subunit C (100 aa).

The protein belongs to the GatC family. Heterotrimer of A, B and C subunits.

It catalyses the reaction L-glutamyl-tRNA(Gln) + L-glutamine + ATP + H2O = L-glutaminyl-tRNA(Gln) + L-glutamate + ADP + phosphate + H(+). The enzyme catalyses L-aspartyl-tRNA(Asn) + L-glutamine + ATP + H2O = L-asparaginyl-tRNA(Asn) + L-glutamate + ADP + phosphate + 2 H(+). Allows the formation of correctly charged Asn-tRNA(Asn) or Gln-tRNA(Gln) through the transamidation of misacylated Asp-tRNA(Asn) or Glu-tRNA(Gln) in organisms which lack either or both of asparaginyl-tRNA or glutaminyl-tRNA synthetases. The reaction takes place in the presence of glutamine and ATP through an activated phospho-Asp-tRNA(Asn) or phospho-Glu-tRNA(Gln). The sequence is that of Aspartyl/glutamyl-tRNA(Asn/Gln) amidotransferase subunit C from Streptococcus gordonii (strain Challis / ATCC 35105 / BCRC 15272 / CH1 / DL1 / V288).